The primary structure comprises 235 residues: ATP-dependent dethiobiotin synthetase BioD (235 aa).

Residue 12–17 (GVGKTF) participates in ATP binding. T16 serves as a coordination point for Mg(2+). The active site involves K37. Position 41 (S41) interacts with substrate. Residues D51, 112-115 (EGAG), and 202-204 (PKL) each bind ATP. D51 and E112 together coordinate Mg(2+).

Belongs to the dethiobiotin synthetase family. In terms of assembly, homodimer. Mg(2+) serves as cofactor.

It localises to the cytoplasm. The enzyme catalyses (7R,8S)-7,8-diammoniononanoate + CO2 + ATP = (4R,5S)-dethiobiotin + ADP + phosphate + 3 H(+). It functions in the pathway cofactor biosynthesis; biotin biosynthesis; biotin from 7,8-diaminononanoate: step 1/2. Functionally, catalyzes a mechanistically unusual reaction, the ATP-dependent insertion of CO2 between the N7 and N8 nitrogen atoms of 7,8-diaminopelargonic acid (DAPA, also called 7,8-diammoniononanoate) to form a ureido ring. The chain is ATP-dependent dethiobiotin synthetase BioD from Bacillus licheniformis (strain ATCC 14580 / DSM 13 / JCM 2505 / CCUG 7422 / NBRC 12200 / NCIMB 9375 / NCTC 10341 / NRRL NRS-1264 / Gibson 46).